Reading from the N-terminus, the 114-residue chain is Cholecystokinin (114 aa).

The N-terminal stretch at 1–20 is a signal peptide; the sequence is MNGGLCLCVLMAVLAAGTLA. Tyr-96 carries the post-translational modification Sulfotyrosine. At Phe-102 the chain carries Phenylalanine amide. Positions 106–114 are excised as a propeptide; that stretch reads SAEEYEYTS. 2 positions are modified to sulfotyrosine: Tyr-110 and Tyr-112.

This sequence belongs to the gastrin/cholecystokinin family. In terms of assembly, binds to CCK-A receptors in the pancreas and CCK-B receptors in the brain. In terms of processing, the precursor is cleaved by proteases to produce a number of active cholecystokinins. Brain contains CCK-octapeptide (CCK8) and several CCK-desoctapeptides; whereas pig gut contains intact CCK33, CCK39, and CCK58 as well as CCK-octapeptide and the CCK-desoctapeptides. Distribution differences are due to tissue-specific post-translational processing events. Post-translationally, the precursor is cleaved by ACE, which removes the Gly-Arg-Arg peptide at the C-terminus, leading to mature hormone. As to expression, synthesized in both cerebral cortex and duodenal mucosa.

It is found in the secreted. Its function is as follows. This peptide hormone induces gall bladder contraction and the release of pancreatic enzymes in the gut. Its function in the brain is not clear. Binding to CCK-A receptors stimulates amylase release from the pancreas, binding to CCK-B receptors stimulates gastric acid secretion. The sequence is that of Cholecystokinin (CCK) from Sus scrofa (Pig).